The primary structure comprises 741 residues: DNA ligase (741 aa).

NAD(+)-binding positions include 78 to 82 (DADYD), 127 to 128 (SL), and Glu-161. Lys-163 (N6-AMP-lysine intermediate) is an active-site residue. Residues Arg-184, Glu-219, Lys-335, and Lys-359 each coordinate NAD(+). Zn(2+) contacts are provided by Cys-464, Cys-467, Cys-482, and Cys-488. The BRCT domain occupies 662-741 (VGDSPVAGKT…DAWRVLAGLA (80 aa)).

It belongs to the NAD-dependent DNA ligase family. LigA subfamily. It depends on Mg(2+) as a cofactor. Requires Mn(2+) as cofactor.

The catalysed reaction is NAD(+) + (deoxyribonucleotide)n-3'-hydroxyl + 5'-phospho-(deoxyribonucleotide)m = (deoxyribonucleotide)n+m + AMP + beta-nicotinamide D-nucleotide.. In terms of biological role, DNA ligase that catalyzes the formation of phosphodiester linkages between 5'-phosphoryl and 3'-hydroxyl groups in double-stranded DNA using NAD as a coenzyme and as the energy source for the reaction. It is essential for DNA replication and repair of damaged DNA. This Dinoroseobacter shibae (strain DSM 16493 / NCIMB 14021 / DFL 12) protein is DNA ligase.